A 196-amino-acid polypeptide reads, in one-letter code: dITP/XTP pyrophosphatase (196 aa).

Residue 7–12 participates in substrate binding; that stretch reads TGNAGK. The Mg(2+) site is built by Glu39 and Asp68. Asp68 serves as the catalytic Proton acceptor. Residues Ser69, 153–156, Lys176, and 181–182 each bind substrate; these read HGYD and HR.

The protein belongs to the HAM1 NTPase family. Homodimer. The cofactor is Mg(2+).

It carries out the reaction XTP + H2O = XMP + diphosphate + H(+). The catalysed reaction is dITP + H2O = dIMP + diphosphate + H(+). It catalyses the reaction ITP + H2O = IMP + diphosphate + H(+). Functionally, pyrophosphatase that catalyzes the hydrolysis of nucleoside triphosphates to their monophosphate derivatives, with a high preference for the non-canonical purine nucleotides XTP (xanthosine triphosphate), dITP (deoxyinosine triphosphate) and ITP. Seems to function as a house-cleaning enzyme that removes non-canonical purine nucleotides from the nucleotide pool, thus preventing their incorporation into DNA/RNA and avoiding chromosomal lesions. The protein is dITP/XTP pyrophosphatase of Thioalkalivibrio sulfidiphilus (strain HL-EbGR7).